The following is a 287-amino-acid chain: uncharacterized protein (287 aa).

The interval M1–K44 is disordered. S37 bears the Phosphoserine mark. The next 5 membrane-spanning stretches (helical) occupy residues F55–T75, T124–V144, F147–L167, P218–A238, and D260–L280.

It is found in the membrane. This is an uncharacterized protein from Arabidopsis thaliana (Mouse-ear cress).